A 277-amino-acid chain; its full sequence is Bis(5'-nucleosyl)-tetraphosphatase, symmetrical (277 aa).

The protein belongs to the Ap4A hydrolase family.

The catalysed reaction is P(1),P(4)-bis(5'-adenosyl) tetraphosphate + H2O = 2 ADP + 2 H(+). Functionally, hydrolyzes diadenosine 5',5'''-P1,P4-tetraphosphate to yield ADP. The chain is Bis(5'-nucleosyl)-tetraphosphatase, symmetrical from Methylobacillus flagellatus (strain ATCC 51484 / DSM 6875 / VKM B-1610 / KT).